Here is a 189-residue protein sequence, read N- to C-terminus: Ribosome hibernation promotion factor (189 aa).

It belongs to the HPF/YfiA ribosome-associated protein family. Long HPF subfamily. Interacts with 100S ribosomes.

The protein resides in the cytoplasm. Its function is as follows. Required for dimerization of active 70S ribosomes into 100S ribosomes in stationary phase; 100S ribosomes are translationally inactive and sometimes present during exponential growth. The sequence is that of Ribosome hibernation promotion factor from Staphylococcus epidermidis (strain ATCC 35984 / DSM 28319 / BCRC 17069 / CCUG 31568 / BM 3577 / RP62A).